Consider the following 310-residue polypeptide: Putative S-adenosyl-L-methionine-dependent methyltransferase MAB_4587c (310 aa).

Residues D126 and 155 to 156 contribute to the S-adenosyl-L-methionine site; that span reads DL.

Belongs to the UPF0677 family.

In terms of biological role, exhibits S-adenosyl-L-methionine-dependent methyltransferase activity. The protein is Putative S-adenosyl-L-methionine-dependent methyltransferase MAB_4587c of Mycobacteroides abscessus (strain ATCC 19977 / DSM 44196 / CCUG 20993 / CIP 104536 / JCM 13569 / NCTC 13031 / TMC 1543 / L948) (Mycobacterium abscessus).